The chain runs to 92 residues: Small ribosomal subunit protein uS19 (92 aa).

Belongs to the universal ribosomal protein uS19 family.

Functionally, protein S19 forms a complex with S13 that binds strongly to the 16S ribosomal RNA. This is Small ribosomal subunit protein uS19 from Corynebacterium kroppenstedtii (strain DSM 44385 / JCM 11950 / CIP 105744 / CCUG 35717).